Consider the following 313-residue polypeptide: Ribosomal RNA small subunit methyltransferase H (313 aa).

S-adenosyl-L-methionine is bound by residues 35 to 37 (GGH), Asp55, Phe81, Asp103, and Gln110.

Belongs to the methyltransferase superfamily. RsmH family.

The protein localises to the cytoplasm. It catalyses the reaction cytidine(1402) in 16S rRNA + S-adenosyl-L-methionine = N(4)-methylcytidine(1402) in 16S rRNA + S-adenosyl-L-homocysteine + H(+). In terms of biological role, specifically methylates the N4 position of cytidine in position 1402 (C1402) of 16S rRNA. This is Ribosomal RNA small subunit methyltransferase H from Pseudomonas syringae pv. tomato (strain ATCC BAA-871 / DC3000).